A 325-amino-acid chain; its full sequence is Tetraacyldisaccharide 4'-kinase (325 aa).

53–60 lines the ATP pocket; the sequence is SVGGNGKT.

This sequence belongs to the LpxK family.

The enzyme catalyses a lipid A disaccharide + ATP = a lipid IVA + ADP + H(+). It functions in the pathway glycolipid biosynthesis; lipid IV(A) biosynthesis; lipid IV(A) from (3R)-3-hydroxytetradecanoyl-[acyl-carrier-protein] and UDP-N-acetyl-alpha-D-glucosamine: step 6/6. In terms of biological role, transfers the gamma-phosphate of ATP to the 4'-position of a tetraacyldisaccharide 1-phosphate intermediate (termed DS-1-P) to form tetraacyldisaccharide 1,4'-bis-phosphate (lipid IVA). The protein is Tetraacyldisaccharide 4'-kinase of Mannheimia succiniciproducens (strain KCTC 0769BP / MBEL55E).